The chain runs to 34 residues: Non-toxic venom protein (34 aa).

The 34-residue stretch at 1–34 (KEGYPTNSEGCKITXLFNDPYCKGXCINLSTQAD) folds into the LCN-type CS-alpha/beta domain.

In terms of tissue distribution, expressed by the venom gland.

The protein resides in the secreted. Its function is as follows. Does not cause symptoms of intoxication, paralysis or death in insects (A.domestica). In Rhopalurus junceus (Caribbean blue scorpion), this protein is Non-toxic venom protein.